We begin with the raw amino-acid sequence, 153 residues long: MRLRVVAVGRDRSGLYAPAIEEYAKRLGRYVKFELVEVPEARKHAGTAQARDEEAEALLAKLGPRERVIALDERGAEWTSVAFAERVRRWTEGGRDVALVIGGSDGLSRAVLDRAEETLALSRMTLAHRLARLVLVEQLYRAMTILRGEPYHK.

S-adenosyl-L-methionine contacts are provided by residues leucine 71, glycine 102, and 121 to 126; that span reads LSRMTL.

Belongs to the RNA methyltransferase RlmH family. Homodimer.

Its subcellular location is the cytoplasm. It carries out the reaction pseudouridine(1915) in 23S rRNA + S-adenosyl-L-methionine = N(3)-methylpseudouridine(1915) in 23S rRNA + S-adenosyl-L-homocysteine + H(+). In terms of biological role, specifically methylates the pseudouridine at position 1915 (m3Psi1915) in 23S rRNA. The chain is Ribosomal RNA large subunit methyltransferase H from Anaeromyxobacter sp. (strain Fw109-5).